Reading from the N-terminus, the 800-residue chain is Ion-translocating oxidoreductase complex subunit C (800 aa).

2 4Fe-4S ferredoxin-type domains span residues 367–398 (DEFS…QQLY) and 408–437 (KARG…VQYY). C378, C381, C384, C388, C417, C420, C423, and C427 together coordinate [4Fe-4S] cluster. Low complexity-rich tracts occupy residues 536 to 553 (GATP…APAP), 571 to 583 (AKQA…PAAT), 599 to 617 (AAIA…APAA), 647 to 667 (AKQA…ADPA), and 675 to 690 (AAIA…KQAA). Disordered regions lie at residues 536–558 (GATP…DDPR), 571–631 (AKQA…QDDP), and 647–706 (AKQA…ENTD). The span at 693–705 (HATTEPVTVQENT) shows a compositional bias: polar residues.

The protein belongs to the 4Fe4S bacterial-type ferredoxin family. RnfC subfamily. The complex is composed of six subunits: RnfA, RnfB, RnfC, RnfD, RnfE and RnfG. Requires [4Fe-4S] cluster as cofactor.

It localises to the cell inner membrane. In terms of biological role, part of a membrane-bound complex that couples electron transfer with translocation of ions across the membrane. In Edwardsiella ictaluri (strain 93-146), this protein is Ion-translocating oxidoreductase complex subunit C.